A 294-amino-acid polypeptide reads, in one-letter code: Equatorin (294 aa).

A signal peptide spans 1–14; that stretch reads MNFILFIFIPGVFS. Residues 15 to 181 lie on the Vesicular side of the membrane; it reads LKSSTLKPTI…QPDLEDLKIK (167 aa). An N-linked (GlcNAc...) asparagine glycan is attached at N76. A disordered region spans residues 107-126; it reads KSTIEEETTTSEPSHKNIQR. N143 carries an N-linked (GlcNAc...) asparagine glycan. Residues 182–202 traverse the membrane as a helical segment; sequence IMLGISLMTLLLFVVLLAFCS. At 203-294 the chain is on the cytoplasmic side; that stretch reads ATLYKLRHLS…MHENDESVTR (92 aa).

As to quaternary structure, interacts with SNAP25. In terms of processing, highly N- and O-glycosylated; contains sialic acid. In terms of tissue distribution, isoform 1 is highly expressed in testis. Isoform 2 is expressed at low levels in skin and blood.

It is found in the cytoplasmic vesicle. Its subcellular location is the secretory vesicle. The protein resides in the acrosome membrane. The protein localises to the acrosome inner membrane. It localises to the acrosome outer membrane. In terms of biological role, acrosomal membrane-anchored protein involved in the process of fertilization and in acrosome biogenesis. The chain is Equatorin (EQTN) from Homo sapiens (Human).